The primary structure comprises 424 residues: UDP-N-acetylglucosamine 1-carboxyvinyltransferase (424 aa).

22–23 (KN) contacts phosphoenolpyruvate. R93 contributes to the UDP-N-acetyl-alpha-D-glucosamine binding site. The active-site Proton donor is the C117. A 2-(S-cysteinyl)pyruvic acid O-phosphothioketal modification is found at C117. Residues 122–126 (RPVDL), 162–165 (KVSV), D307, and I329 each bind UDP-N-acetyl-alpha-D-glucosamine.

Belongs to the EPSP synthase family. MurA subfamily.

Its subcellular location is the cytoplasm. The enzyme catalyses phosphoenolpyruvate + UDP-N-acetyl-alpha-D-glucosamine = UDP-N-acetyl-3-O-(1-carboxyvinyl)-alpha-D-glucosamine + phosphate. It functions in the pathway cell wall biogenesis; peptidoglycan biosynthesis. In terms of biological role, cell wall formation. Adds enolpyruvyl to UDP-N-acetylglucosamine. The chain is UDP-N-acetylglucosamine 1-carboxyvinyltransferase from Haemophilus influenzae (strain PittGG).